We begin with the raw amino-acid sequence, 302 residues long: MDQKRLTHLRQLEAESIHIIREVAAEFSNPVMLYSIGKDSSVMLHLARKAFYPGTLPFPLLHVDTGWKFREMYEFRDRTAKAYGCELLVHKNPEGVAMGINPFVHGSAKHTDIMKTEGLKQALNKYGFDAAFGGARRDEEKSRAKERIYSFRDRFHRWDPKNQRPELWHNYNGQINKGESIRVFPLSNWTEQDIWQYIWLENIDIVPLYLAAERPVLERDGMLMMIDDNRIDLQPGEVIKKRMVRFRTLGCWPLTGAVESNAQTLPEIIEEMLVSTTSERQGRVIDRDQAGSMELKKRQGYF.

The protein belongs to the PAPS reductase family. CysD subfamily. Heterodimer composed of CysD, the smaller subunit, and CysN.

It catalyses the reaction sulfate + ATP + H(+) = adenosine 5'-phosphosulfate + diphosphate. It functions in the pathway sulfur metabolism; hydrogen sulfide biosynthesis; sulfite from sulfate: step 1/3. With CysN forms the ATP sulfurylase (ATPS) that catalyzes the adenylation of sulfate producing adenosine 5'-phosphosulfate (APS) and diphosphate, the first enzymatic step in sulfur assimilation pathway. APS synthesis involves the formation of a high-energy phosphoric-sulfuric acid anhydride bond driven by GTP hydrolysis by CysN coupled to ATP hydrolysis by CysD. This Escherichia coli O81 (strain ED1a) protein is Sulfate adenylyltransferase subunit 2.